The primary structure comprises 984 residues: uncharacterized protein (984 aa).

The disordered stretch occupies residues 941–984; sequence FGPSGPGPNQGPGDDYNNFKSTKYPRNGYNKYQPNNRIHSRNRY.

It is found in the virion. This is an uncharacterized protein from Acanthamoeba polyphaga (Amoeba).